We begin with the raw amino-acid sequence, 1294 residues long: Disease resistance protein L6 (1294 aa).

Positions 1–29 are cleaved as a signal peptide; sequence MSYLREVATAVALLLPFILLNKFWRPNSK. The disordered stretch occupies residues 34-54; that stretch reads NDDDDSTSEVDAISDSTNPSG. One can recognise a TIR domain in the interval 59-221; it reads VEYEVFLSFR…AIADKVSADI (163 aa). Residues 68–73 and Gly101 contribute to the NAD(+) site; that span reads RGPDTR. Glu135 is an active-site residue. Residues 241–480 form the NB-ARC domain; it reads DDHITAVLEK…VYDRLKISYD (240 aa). LRR repeat units follow at residues 246 to 268, 468 to 492, 604 to 625, 626 to 650, 904 to 928, 1012 to 1039, 1063 to 1085, 1086 to 1109, 1179 to 1203, 1205 to 1229, and 1254 to 1278; these read AVLE…GMGG, LDEV…IFLD, LSEL…NNLL, PNLK…NYTM, LENL…GLQG, FPML…SLEE, LQKL…LEEL, KSLQ…KLKE, LEEL…SFLS, LQKL…ELKS, and LKNL…ALKT.

Belongs to the disease resistance TIR-NB-LRR family. In terms of assembly, homooligomer; homooligomerization is required for activity.

It catalyses the reaction NAD(+) + H2O = ADP-D-ribose + nicotinamide + H(+). The catalysed reaction is NADP(+) + H2O = ADP-D-ribose 2'-phosphate + nicotinamide + H(+). The enzyme catalyses NAD(+) = 2'cADPR + nicotinamide + H(+). Its function is as follows. TIR-NB-LRR receptor-like protein that confers resistance to the flax rust phytopathogenic fungus (M.lini). An NAD(+) hydrolase (NADase): in response to activation, catalyzes cleavage of NAD(+) into ADP-D-ribose (ADPR) and nicotinamide; NAD(+) cleavage triggering a defense system that promotes cell death. Also able to hydrolyze NADP(+), but not other NAD(+)-related molecules. Makes small amounts of 2' cyclic ADPR (2'cADPR). The protein is Disease resistance protein L6 of Linum usitatissimum (Flax).